The following is a 296-amino-acid chain: Sulfotransferase 1E1 (296 aa).

49–54 (KSGTTW) contributes to the 3'-phosphoadenylyl sulfate binding site. A substrate-binding site is contributed by 107–109 (KTH). Catalysis depends on H109, which acts as the Proton acceptor. 3'-phosphoadenylyl sulfate-binding positions include R131, S139, Y194, 228–233 (TSFQEM), and 258–260 (RKG).

It belongs to the sulfotransferase 1 family. Homodimer. In terms of processing, the N-terminus is blocked. As to expression, adrenal gland and much less in liver. Detectable only during pregnancy in uterine.

The protein resides in the cytoplasm. Its subcellular location is the cytosol. The enzyme catalyses estrone + 3'-phosphoadenylyl sulfate = estrone 3-sulfate + adenosine 3',5'-bisphosphate + H(+). The catalysed reaction is (24S)-hydroxycholesterol + 3'-phosphoadenylyl sulfate = (24S)-hydroxycholesterol 3-sulfate + adenosine 3',5'-bisphosphate + H(+). It carries out the reaction 17beta-estradiol + 3'-phosphoadenylyl sulfate = 17beta-estradiol 3-sulfate + adenosine 3',5'-bisphosphate + H(+). It catalyses the reaction 3beta-hydroxyandrost-5-en-17-one + 3'-phosphoadenylyl sulfate = dehydroepiandrosterone 3-sulfate + adenosine 3',5'-bisphosphate + H(+). The enzyme catalyses 4-ethylphenol + 3'-phosphoadenylyl sulfate = 4-ethylphenyl sulfate + adenosine 3',5'-bisphosphate + H(+). With respect to regulation, inhibited by estradiol. Its function is as follows. Sulfotransferase that utilizes 3'-phospho-5'-adenylyl sulfate (PAPS) as sulfonate donor to catalyze the sulfate conjugation of estradiol and estrone. Is a key enzyme in estrogen homeostasis, the sulfation of estrogens leads to their inactivation. Also sulfates dehydroepiandrosterone (DHEA), pregnenolone, (24S)-hydroxycholesteroland xenobiotic compounds like ethinylestradiol, equalenin, diethyl stilbesterol and 1-naphthol at significantly lower efficiency. Does not sulfonate cortisol, testosterone and dopamine. May play a role in gut microbiota-host metabolic interaction. O-sulfonates 4-ethylphenol (4-EP), a dietary tyrosine-derived metabolite produced by gut bacteria. The product 4-EPS crosses the blood-brain barrier and may negatively regulate oligodendrocyte maturation and myelination, affecting the functional connectivity of different brain regions associated with the limbic system. In Cavia porcellus (Guinea pig), this protein is Sulfotransferase 1E1 (SULT1E1).